We begin with the raw amino-acid sequence, 251 residues long: Ubiquinone/menaquinone biosynthesis C-methyltransferase UbiE (251 aa).

Residues Thr74, Asp95, 123-124 (NA), and Ser140 contribute to the S-adenosyl-L-methionine site.

The protein belongs to the class I-like SAM-binding methyltransferase superfamily. MenG/UbiE family.

The catalysed reaction is a 2-demethylmenaquinol + S-adenosyl-L-methionine = a menaquinol + S-adenosyl-L-homocysteine + H(+). The enzyme catalyses a 2-methoxy-6-(all-trans-polyprenyl)benzene-1,4-diol + S-adenosyl-L-methionine = a 5-methoxy-2-methyl-3-(all-trans-polyprenyl)benzene-1,4-diol + S-adenosyl-L-homocysteine + H(+). It participates in quinol/quinone metabolism; menaquinone biosynthesis; menaquinol from 1,4-dihydroxy-2-naphthoate: step 2/2. It functions in the pathway cofactor biosynthesis; ubiquinone biosynthesis. Methyltransferase required for the conversion of demethylmenaquinol (DMKH2) to menaquinol (MKH2) and the conversion of 2-polyprenyl-6-methoxy-1,4-benzoquinol (DDMQH2) to 2-polyprenyl-3-methyl-6-methoxy-1,4-benzoquinol (DMQH2). This Pectobacterium atrosepticum (strain SCRI 1043 / ATCC BAA-672) (Erwinia carotovora subsp. atroseptica) protein is Ubiquinone/menaquinone biosynthesis C-methyltransferase UbiE.